Here is a 452-residue protein sequence, read N- to C-terminus: Phosphoglucosamine mutase (452 aa).

Catalysis depends on S97, which acts as the Phosphoserine intermediate. Positions 97, 236, 238, and 240 each coordinate Mg(2+). At S97 the chain carries Phosphoserine.

The protein belongs to the phosphohexose mutase family. The cofactor is Mg(2+). In terms of processing, activated by phosphorylation.

The catalysed reaction is alpha-D-glucosamine 1-phosphate = D-glucosamine 6-phosphate. In terms of biological role, catalyzes the conversion of glucosamine-6-phosphate to glucosamine-1-phosphate. This Prochlorococcus marinus subsp. pastoris (strain CCMP1986 / NIES-2087 / MED4) protein is Phosphoglucosamine mutase.